The following is a 95-amino-acid chain: Small ribosomal subunit protein uS19 (95 aa).

Belongs to the universal ribosomal protein uS19 family.

In terms of biological role, protein S19 forms a complex with S13 that binds strongly to the 16S ribosomal RNA. The polypeptide is Small ribosomal subunit protein uS19 (Thermodesulfovibrio yellowstonii (strain ATCC 51303 / DSM 11347 / YP87)).